A 506-amino-acid chain; its full sequence is Maturase K (506 aa).

The protein belongs to the intron maturase 2 family. MatK subfamily.

The protein localises to the plastid. The protein resides in the chloroplast. Usually encoded in the trnK tRNA gene intron. Probably assists in splicing its own and other chloroplast group II introns. The sequence is that of Maturase K from Trifolium beckwithii (Beckwith's clover).